The sequence spans 331 residues: Serine/threonine-protein phosphatase 6 catalytic subunit (331 aa).

Aspartate 79, histidine 81, aspartate 107, and asparagine 139 together coordinate Mn(2+). Histidine 140 serves as the catalytic Proton donor. Mn(2+)-binding residues include histidine 189 and histidine 264.

The protein belongs to the PPP phosphatase family. PP-6 (PP-V) subfamily. In terms of assembly, forms a complex composed of catalytic subunit pph-6 and regulatory subunit saps-1; the interaction increases pph-6 and saps-1 protein stability. Mn(2+) serves as cofactor.

The protein localises to the cytoplasm. Its subcellular location is the cell cortex. It is found in the cytoskeleton. The protein resides in the spindle pole. The enzyme catalyses O-phospho-L-seryl-[protein] + H2O = L-seryl-[protein] + phosphate. It carries out the reaction O-phospho-L-threonyl-[protein] + H2O = L-threonyl-[protein] + phosphate. In terms of biological role, catalytic subunit of protein phosphatase 6 (PP6). In complex with saps-1, promotes actomyosin contractility during cytokinesis by regulating the organization of cortical non-muscle myosin II nmy-2 and thus contributing to correct spindle positioning. Also required for the proper generation of pulling forces on spindle poles during anaphase by regulating the cortical localization of gpr-1, gpr-2 and lin-5. The polypeptide is Serine/threonine-protein phosphatase 6 catalytic subunit (Caenorhabditis elegans).